The following is a 546-amino-acid chain: Flavin-dependent oxygenase ucdF (546 aa).

An FAD-binding PCMH-type domain is found at 81–263 (QGRIPYYAVM…VNTTIRTFPD (183 aa)).

The protein belongs to the oxygen-dependent FAD-linked oxidoreductase family.

In terms of biological role, nonribosomal peptide synthetase that mediates the biosynthesis of usterphenyllins and uscandidusins, p-terphenyl derivatives. The function of ucdF within the pathway still remains to be determined. UcdE further prenylates position C-14 of ring C of usterphenyllin B to form usterphenyllin A. The pathway begin with the biosynthesis of 4-hydroxyphenylpyruvate (HPPA) from L-tyrosine, possibly by the aminotransferase ucdG. The nonribosomal peptide synthetase ucdA then condenses two HPPA units to produce atromentin. The key step in this pathway is the reduction and dehydration of atromentin to form a terphenyl triol intermediate, performed by the NAD-dependent dehydrogenase ucdB. Further O-methylation by the methyltransferase ucdC forms terphenyllin carrying two methoxy moieties at C-9 and C-12, and subsequent dihydroxylation at C-3 of ring A and C-15 of ring C by the flavin-dependent oxygenase ucdD leads to 3,15-dihydroxyterphenyllin. Prenylation by ucdE at position C-5 of ring A forms usterphenyllin B, and is followed by a second prenylation at position C-14 of ring C to form usterphenyllin A. The following furan ring formation that leads to uscandidusins A and B was proven to be an unexpected spontaneous non-enzymatic reaction. In Aspergillus ustus, this protein is Flavin-dependent oxygenase ucdF.